The chain runs to 31 residues: 23S rRNA methylase leader peptide (31 aa).

This peptide is involved in the control mechanism of the synthesis of the erythromycin resistance protein. The sequence is that of 23S rRNA methylase leader peptide (ermC) from Escherichia coli.